A 33-amino-acid polypeptide reads, in one-letter code: Ferredoxin (33 aa).

The 31-residue stretch at 3-33 (KYKVRLLSEAEGIDVTIDSADDVYILDAAEE) folds into the 2Fe-2S ferredoxin-type domain.

It belongs to the 2Fe2S plant-type ferredoxin family. [2Fe-2S] cluster serves as cofactor.

Its subcellular location is the plastid. The protein resides in the chloroplast. Its function is as follows. Ferredoxins are iron-sulfur proteins that transfer electrons in a wide variety of metabolic reactions. The protein is Ferredoxin of Porphyridium aerugineum (Red microalga).